The primary structure comprises 215 residues: LexA repressor (215 aa).

The segment at residues 28-48 (RAEIAAELGFSSPNAAEEHLR) is a DNA-binding region (H-T-H motif). Active-site for autocatalytic cleavage activity residues include S133 and K170.

Belongs to the peptidase S24 family. As to quaternary structure, homodimer.

The enzyme catalyses Hydrolysis of Ala-|-Gly bond in repressor LexA.. Functionally, represses a number of genes involved in the response to DNA damage (SOS response), including recA and lexA. In the presence of single-stranded DNA, RecA interacts with LexA causing an autocatalytic cleavage which disrupts the DNA-binding part of LexA, leading to derepression of the SOS regulon and eventually DNA repair. The chain is LexA repressor from Burkholderia cenocepacia (strain HI2424).